The chain runs to 404 residues: Cysteine desulfurase IscS (404 aa).

Pyridoxal 5'-phosphate is bound by residues 75 to 76 (AT), Asn155, Gln183, and 203 to 205 (SAH). Lys206 is modified (N6-(pyridoxal phosphate)lysine). Thr243 contacts pyridoxal 5'-phosphate. Residue Cys328 is the Cysteine persulfide intermediate of the active site. Residue Cys328 participates in [2Fe-2S] cluster binding.

This sequence belongs to the class-V pyridoxal-phosphate-dependent aminotransferase family. NifS/IscS subfamily. Homodimer. Forms a heterotetramer with IscU, interacts with other sulfur acceptors. Pyridoxal 5'-phosphate is required as a cofactor.

It localises to the cytoplasm. The catalysed reaction is (sulfur carrier)-H + L-cysteine = (sulfur carrier)-SH + L-alanine. It participates in cofactor biosynthesis; iron-sulfur cluster biosynthesis. Its function is as follows. Master enzyme that delivers sulfur to a number of partners involved in Fe-S cluster assembly, tRNA modification or cofactor biosynthesis. Catalyzes the removal of elemental sulfur atoms from cysteine to produce alanine. Functions as a sulfur delivery protein for Fe-S cluster synthesis onto IscU, an Fe-S scaffold assembly protein, as well as other S acceptor proteins. The sequence is that of Cysteine desulfurase IscS from Neisseria meningitidis serogroup C (strain 053442).